A 178-amino-acid polypeptide reads, in one-letter code: Cytochrome b6-f complex iron-sulfur subunit (178 aa).

A helical transmembrane segment spans residues 20–42; sequence LLTFGTATGVALGALYPVANYFM. Residues 65–161 form the Rieske domain; that stretch reads KTGWLATHQA…VDIEDDAVLV (97 aa). [2Fe-2S] cluster contacts are provided by cysteine 107, histidine 109, cysteine 125, and histidine 128. A disulfide bond links cysteine 112 and cysteine 127.

This sequence belongs to the Rieske iron-sulfur protein family. As to quaternary structure, the 4 large subunits of the cytochrome b6-f complex are cytochrome b6, subunit IV (17 kDa polypeptide, PetD), cytochrome f and the Rieske protein, while the 4 small subunits are PetG, PetL, PetM and PetN. The complex functions as a dimer. The cofactor is [2Fe-2S] cluster.

It localises to the cellular thylakoid membrane. It carries out the reaction 2 oxidized [plastocyanin] + a plastoquinol + 2 H(+)(in) = 2 reduced [plastocyanin] + a plastoquinone + 4 H(+)(out). Its function is as follows. Component of the cytochrome b6-f complex, which mediates electron transfer between photosystem II (PSII) and photosystem I (PSI), cyclic electron flow around PSI, and state transitions. This is Cytochrome b6-f complex iron-sulfur subunit from Prochlorococcus marinus (strain AS9601).